Here is a 305-residue protein sequence, read N- to C-terminus: Maximins-S type B/C (305 aa).

The signal sequence occupies residues 1-18 (MNFNYFILVLFFITSGHA). 2 consecutive propeptides follow at residues 19–35 (KSET…HIKR) and 52–65 (SAEE…LVTR). The residue at position 83 (Asn83) is an Asparagine amide. Positions 87 to 100 (SAEEQDLAEHLVTR) are excised as a propeptide. Asn118 is modified (asparagine amide). The propeptide occupies 122 to 135 (SAEEQDLAEDLVTR). Lysine amide is present on Lys153. Positions 157–170 (SAEDQDLAEDLVTR) are excised as a propeptide. Asn188 carries the post-translational modification Asparagine amide. Residues 192 to 205 (SAEEQDLAEHLVTR) constitute a propeptide that is removed on maturation. Asn223 carries the asparagine amide modification. The propeptide occupies 227–240 (SAEEQDLSEDLVTR). Position 258 is an asparagine amide (Asn258). Residues 262 to 275 (SAEEQDLVEDLVTR) constitute a propeptide that is removed on maturation. Residue Lys293 is modified to Lysine amide. Residues 297 to 305 (SAEQEKDMK) constitute a propeptide that is removed on maturation.

The protein belongs to the maximin-S family. Expressed by the skin dorsal glands.

The protein resides in the secreted. In terms of biological role, maximin-S1 has no antimicrobial activity. Has no hemolytic activity. Maximin-S2 has an activity against mycoplasma but has no activity against common Gram-positive and Gram-negative bacteria nor fungi. Has no hemolytic activity. Functionally, maximin-S3 has an activity against mycoplasma but has no activity against common Gram-positive and Gram-negative bacteria nor fungi. Has no hemolytic activity. Its function is as follows. Maximin-S4 has an activity against mycoplasma but has no activity against common Gram-positive and Gram-negative bacteria nor fungi. Has no hemolytic activity. In terms of biological role, maximin-S5 has an activity against mycoplasma but has no activity against common Gram-positive and Gram-negative bacteria nor fungi. Has no hemolytic activity. The chain is Maximins-S type B/C from Bombina maxima (Giant fire-bellied toad).